The primary structure comprises 343 residues: UDP-3-O-acylglucosamine N-acyltransferase (343 aa).

The Proton acceptor role is filled by histidine 239.

It belongs to the transferase hexapeptide repeat family. LpxD subfamily. Homotrimer.

It catalyses the reaction a UDP-3-O-[(3R)-3-hydroxyacyl]-alpha-D-glucosamine + a (3R)-hydroxyacyl-[ACP] = a UDP-2-N,3-O-bis[(3R)-3-hydroxyacyl]-alpha-D-glucosamine + holo-[ACP] + H(+). It participates in bacterial outer membrane biogenesis; LPS lipid A biosynthesis. In terms of biological role, catalyzes the N-acylation of UDP-3-O-acylglucosamine using 3-hydroxyacyl-ACP as the acyl donor. Is involved in the biosynthesis of lipid A, a phosphorylated glycolipid that anchors the lipopolysaccharide to the outer membrane of the cell. This Vibrio parahaemolyticus serotype O3:K6 (strain RIMD 2210633) protein is UDP-3-O-acylglucosamine N-acyltransferase.